A 93-amino-acid polypeptide reads, in one-letter code: MKKLVLLFALVLLGFQVQADSIQNTDEETKTEEQPGEEDQAVSVSFGDPEGTSLQEESLRDLVCYCRSRGCKGRERMNGTCRKGHLLYTLCCR.

The signal sequence occupies residues 1 to 19; it reads MKKLVLLFALVLLGFQVQA. Residues 20–58 constitute a propeptide that is removed on maturation; it reads DSIQNTDEETKTEEQPGEEDQAVSVSFGDPEGTSLQEES. The tract at residues 24–54 is disordered; sequence NTDEETKTEEQPGEEDQAVSVSFGDPEGTSL. 3 disulfides stabilise this stretch: Cys-64-Cys-92, Cys-66-Cys-81, and Cys-71-Cys-91.

Belongs to the alpha-defensin family. Paneth cells of the small bowel.

It is found in the secreted. In terms of biological role, probably contributes to the antimicrobial barrier function of the small bowel mucosa. Has antibacterial activity against attenuated mutants of S.typhimurium. The polypeptide is Alpha-defensin 1 (Defa1) (Mus musculus (Mouse)).